A 129-amino-acid polypeptide reads, in one-letter code: NADH-quinone oxidoreductase subunit A (129 aa).

A run of 3 helical transmembrane segments spans residues 14–34 (LAIH…VAAV), 67–87 (FLIA…FAWA), and 97–117 (GLIE…YLWI).

The protein belongs to the complex I subunit 3 family. As to quaternary structure, NDH-1 is composed of 14 different subunits. Subunits NuoA, H, J, K, L, M, N constitute the membrane sector of the complex.

Its subcellular location is the cell inner membrane. The enzyme catalyses a quinone + NADH + 5 H(+)(in) = a quinol + NAD(+) + 4 H(+)(out). Functionally, NDH-1 shuttles electrons from NADH, via FMN and iron-sulfur (Fe-S) centers, to quinones in the respiratory chain. The immediate electron acceptor for the enzyme in this species is believed to be ubiquinone. Couples the redox reaction to proton translocation (for every two electrons transferred, four hydrogen ions are translocated across the cytoplasmic membrane), and thus conserves the redox energy in a proton gradient. The sequence is that of NADH-quinone oxidoreductase subunit A from Rhodopseudomonas palustris (strain BisB18).